The chain runs to 167 residues: G/U mismatch-specific DNA glycosylase (167 aa).

It belongs to the uracil-DNA glycosylase (UDG) superfamily. TDG/mug family. In terms of assembly, binds DNA as a monomer.

Its subcellular location is the cytoplasm. The enzyme catalyses Specifically hydrolyzes mismatched double-stranded DNA and polynucleotides, releasing free uracil.. Its function is as follows. Excises ethenocytosine and uracil, which can arise by alkylation or deamination of cytosine, respectively, from the corresponding mispairs with guanine in ds-DNA. It is capable of hydrolyzing the carbon-nitrogen bond between the sugar-phosphate backbone of the DNA and the mispaired base. The complementary strand guanine functions in substrate recognition. Required for DNA damage lesion repair in stationary-phase cells. This chain is G/U mismatch-specific DNA glycosylase, found in Pectobacterium carotovorum subsp. carotovorum (strain PC1).